Reading from the N-terminus, the 63-residue chain is U7-theraphotoxin-Cg1a (63 aa).

An N-terminal signal peptide occupies residues 1 to 21 (MKTSILFVIFGLALLFALSVA). Residues 22-31 (IEMEEEETDR) constitute a propeptide that is removed on maturation. Intrachain disulfides connect cysteine 33–cysteine 47, cysteine 40–cysteine 52, and cysteine 46–cysteine 59.

Expressed by the venom gland.

Its subcellular location is the secreted. Functionally, inhibits preferentially tetrodotoxin-insensitive sodium currents (Nav) on rat cardiac myocytes (IC(50) is 0.26 uM) and has weaker inhibition activity toward tetrodotoxin-sensitive sodium currents on rat dorsal root ganglion (DRG) sensory neurons (IC(50) is 0.83 uM) and on cockroach dorsal unpaired median (DUM) neurons (IC(50) is 1.19 uM). Has no significant effect on potassium currents on DRG neurons. The chain is U7-theraphotoxin-Cg1a from Chilobrachys guangxiensis (Chinese earth tiger tarantula).